A 61-amino-acid polypeptide reads, in one-letter code: Large ribosomal subunit protein uL30 (61 aa).

The protein belongs to the universal ribosomal protein uL30 family. As to quaternary structure, part of the 50S ribosomal subunit.

This is Large ribosomal subunit protein uL30 from Chlorobaculum tepidum (strain ATCC 49652 / DSM 12025 / NBRC 103806 / TLS) (Chlorobium tepidum).